A 203-amino-acid chain; its full sequence is Selenocysteine-containing peroxiredoxin PrxU (203 aa).

In terms of domain architecture, Thioredoxin spans 2-160; the sequence is VSVGKKAPDF…TLRQIQAFQL (159 aa). Sec47 is a catalytic residue. Sec47 is a non-standard amino acid (selenocysteine).

This sequence belongs to the peroxiredoxin family. AhpC/Prx1 subfamily.

The enzyme catalyses a hydroperoxide + [thioredoxin]-dithiol = an alcohol + [thioredoxin]-disulfide + H2O. Functionally, thiol-specific peroxidase that catalyzes the reduction of hydrogen peroxide and organic hydroperoxides to water and alcohols, respectively. Plays a role in cell protection against oxidative stress by detoxifying peroxides. This chain is Selenocysteine-containing peroxiredoxin PrxU, found in Peptoclostridium acidaminophilum (Eubacterium acidaminophilum).